Consider the following 874-residue polypeptide: Alanine--tRNA ligase (874 aa).

Residues H563, H567, C665, and H669 each coordinate Zn(2+).

The protein belongs to the class-II aminoacyl-tRNA synthetase family. The cofactor is Zn(2+).

The protein resides in the cytoplasm. The enzyme catalyses tRNA(Ala) + L-alanine + ATP = L-alanyl-tRNA(Ala) + AMP + diphosphate. Catalyzes the attachment of alanine to tRNA(Ala) in a two-step reaction: alanine is first activated by ATP to form Ala-AMP and then transferred to the acceptor end of tRNA(Ala). Also edits incorrectly charged Ser-tRNA(Ala) and Gly-tRNA(Ala) via its editing domain. The sequence is that of Alanine--tRNA ligase from Actinobacillus pleuropneumoniae serotype 3 (strain JL03).